Reading from the N-terminus, the 653-residue chain is 1-deoxy-D-xylulose-5-phosphate synthase (653 aa).

Residues His-86 and 127–129 (GHS) each bind thiamine diphosphate. Asp-158 serves as a coordination point for Mg(2+). Thiamine diphosphate is bound by residues 159–160 (GA), Asn-187, and Phe-294. Asn-187 is a binding site for Mg(2+). Residues 309–324 (KLEKTTSEPPPKKEPR) are compositionally biased toward basic and acidic residues. The tract at residues 309–343 (KLEKTTSEPPPKKEPRSPNAATAEPEAQPKPQPKP) is disordered. A thiamine diphosphate-binding site is contributed by Glu-395.

Belongs to the transketolase family. DXPS subfamily. In terms of assembly, homodimer. Mg(2+) serves as cofactor. Requires thiamine diphosphate as cofactor.

The catalysed reaction is D-glyceraldehyde 3-phosphate + pyruvate + H(+) = 1-deoxy-D-xylulose 5-phosphate + CO2. It participates in metabolic intermediate biosynthesis; 1-deoxy-D-xylulose 5-phosphate biosynthesis; 1-deoxy-D-xylulose 5-phosphate from D-glyceraldehyde 3-phosphate and pyruvate: step 1/1. Functionally, catalyzes the acyloin condensation reaction between C atoms 2 and 3 of pyruvate and glyceraldehyde 3-phosphate to yield 1-deoxy-D-xylulose-5-phosphate (DXP). The sequence is that of 1-deoxy-D-xylulose-5-phosphate synthase from Chromohalobacter salexigens (strain ATCC BAA-138 / DSM 3043 / CIP 106854 / NCIMB 13768 / 1H11).